A 251-amino-acid polypeptide reads, in one-letter code: Triosephosphate isomerase (251 aa).

9–11 (NWK) is a substrate binding site. Residue His-95 is the Electrophile of the active site. Catalysis depends on Glu-167, which acts as the Proton acceptor. Residues Gly-173, Ser-212, and 233 to 234 (GG) contribute to the substrate site.

Belongs to the triosephosphate isomerase family. Homodimer.

Its subcellular location is the cytoplasm. The enzyme catalyses D-glyceraldehyde 3-phosphate = dihydroxyacetone phosphate. It functions in the pathway carbohydrate biosynthesis; gluconeogenesis. The protein operates within carbohydrate degradation; glycolysis; D-glyceraldehyde 3-phosphate from glycerone phosphate: step 1/1. Involved in the gluconeogenesis. Catalyzes stereospecifically the conversion of dihydroxyacetone phosphate (DHAP) to D-glyceraldehyde-3-phosphate (G3P). The chain is Triosephosphate isomerase from Vibrio sp. (strain ANT-300).